The following is a 221-amino-acid chain: MAKFNNNILLIILIIVILFIIFYFLNKNNQSNTNNNYPVSHFSSNVSRTLPVNTNVTVPTVNDCDELSENIVESLLSKYDSSMMSDRSPFHNLVQQKQQTLRSYDGPYDNDESDDRDFTYKKNKFTRRTPNDLNDLFDVNKMLPQETEEDWFDDLHMKNAKHINNTHMIHPKKHRGLDTIGSTHKNATHDLRGDIPNPKMSVSPWGNSTIEPDVFARGLCG.

Positions 1-30 (MAKFNNNILLIILIIVILFIIFYFLNKNNQ) are cleaved as a signal peptide.

The protein localises to the virion. This is an uncharacterized protein from Acanthamoeba polyphaga mimivirus (APMV).